Consider the following 553-residue polypeptide: Phospholipase B-like 1 (553 aa).

Residues 1-38 (MTRGGPGGRPGLPQPPPLLLLLLLLPLLLVTAEPPKPA) form the signal peptide. N-linked (GlcNAc...) (high mannose) asparagine; alternate glycosylation occurs at Asn-71. The N-linked (GlcNAc...) (hybrid) asparagine; alternate glycan is linked to Asn-71. A propeptide spans 209–227 (LSPTKNGSLKVFKRWDMGH) (removed in mature form). Asn-308 and Asn-366 each carry an N-linked (GlcNAc...) (high mannose) asparagine; alternate glycan. N-linked (GlcNAc...) (hybrid) asparagine; alternate glycans are attached at residues Asn-308 and Asn-366. Asn-411 is a glycosylation site (N-linked (GlcNAc...) asparagine). 2 disulfides stabilise this stretch: Cys-470/Cys-475 and Cys-474/Cys-489. An N-linked (GlcNAc...) (high mannose) asparagine; alternate glycan is attached at Asn-526. Asn-526 carries N-linked (GlcNAc...) (hybrid) asparagine; alternate glycosylation.

Belongs to the phospholipase B-like family. As to quaternary structure, may form a homodimer, each monomer is composed of a chain A and a chain B. In terms of processing, the maturation cleavages that produces chains A and B are required to open the putative substrate binding pocket. Both chains A and B remain associated in the mature protein. In terms of tissue distribution, expressed in neutrophils and monocytes.

The protein localises to the lysosome. In terms of biological role, in view of the small size of the putative binding pocket, it has been proposed that it may act as an amidase or a peptidase. Exhibits a weak phospholipase activity, acting on various phospholipids, including phosphatidylcholine, phosphatidylinositol, phosphatidylethanolamine and lysophospholipids. This Homo sapiens (Human) protein is Phospholipase B-like 1 (PLBD1).